Here is a 160-residue protein sequence, read N- to C-terminus: SsrA-binding protein (160 aa).

Belongs to the SmpB family.

Its subcellular location is the cytoplasm. In terms of biological role, required for rescue of stalled ribosomes mediated by trans-translation. Binds to transfer-messenger RNA (tmRNA), required for stable association of tmRNA with ribosomes. tmRNA and SmpB together mimic tRNA shape, replacing the anticodon stem-loop with SmpB. tmRNA is encoded by the ssrA gene; the 2 termini fold to resemble tRNA(Ala) and it encodes a 'tag peptide', a short internal open reading frame. During trans-translation Ala-aminoacylated tmRNA acts like a tRNA, entering the A-site of stalled ribosomes, displacing the stalled mRNA. The ribosome then switches to translate the ORF on the tmRNA; the nascent peptide is terminated with the 'tag peptide' encoded by the tmRNA and targeted for degradation. The ribosome is freed to recommence translation, which seems to be the essential function of trans-translation. This chain is SsrA-binding protein, found in Salmonella arizonae (strain ATCC BAA-731 / CDC346-86 / RSK2980).